The chain runs to 307 residues: Putative S-adenosyl-L-methionine-dependent methyltransferase MMAR_4570 (307 aa).

S-adenosyl-L-methionine contacts are provided by residues Asp-128 and 157–158 (DL).

Belongs to the UPF0677 family.

Functionally, exhibits S-adenosyl-L-methionine-dependent methyltransferase activity. The polypeptide is Putative S-adenosyl-L-methionine-dependent methyltransferase MMAR_4570 (Mycobacterium marinum (strain ATCC BAA-535 / M)).